A 209-amino-acid chain; its full sequence is Ribosomal RNA large subunit methyltransferase E (209 aa).

S-adenosyl-L-methionine contacts are provided by Gly-63, Trp-65, Asp-83, Asp-99, and Asp-124. The active-site Proton acceptor is the Lys-164.

Belongs to the class I-like SAM-binding methyltransferase superfamily. RNA methyltransferase RlmE family.

The protein localises to the cytoplasm. The catalysed reaction is uridine(2552) in 23S rRNA + S-adenosyl-L-methionine = 2'-O-methyluridine(2552) in 23S rRNA + S-adenosyl-L-homocysteine + H(+). Functionally, specifically methylates the uridine in position 2552 of 23S rRNA at the 2'-O position of the ribose in the fully assembled 50S ribosomal subunit. The protein is Ribosomal RNA large subunit methyltransferase E of Buchnera aphidicola subsp. Cinara cedri (strain Cc).